We begin with the raw amino-acid sequence, 78 residues long: Large ribosomal subunit protein bL28 (78 aa).

The protein belongs to the bacterial ribosomal protein bL28 family.

The polypeptide is Large ribosomal subunit protein bL28 (Alcanivorax borkumensis (strain ATCC 700651 / DSM 11573 / NCIMB 13689 / SK2)).